Here is a 211-residue protein sequence, read N- to C-terminus: Thiamine-phosphate synthase (211 aa).

4-amino-2-methyl-5-(diphosphooxymethyl)pyrimidine contacts are provided by residues 37–41 and Asn-69; that span reads QLRIK. Mg(2+)-binding residues include Asp-70 and Asp-89. A 4-amino-2-methyl-5-(diphosphooxymethyl)pyrimidine-binding site is contributed by Ser-108. Residue 134–136 coordinates 2-[(2R,5Z)-2-carboxy-4-methylthiazol-5(2H)-ylidene]ethyl phosphate; the sequence is TQT. Residue Lys-137 coordinates 4-amino-2-methyl-5-(diphosphooxymethyl)pyrimidine. 2-[(2R,5Z)-2-carboxy-4-methylthiazol-5(2H)-ylidene]ethyl phosphate is bound by residues Gly-166 and 186-187; that span reads IS.

It belongs to the thiamine-phosphate synthase family. The cofactor is Mg(2+).

The enzyme catalyses 2-[(2R,5Z)-2-carboxy-4-methylthiazol-5(2H)-ylidene]ethyl phosphate + 4-amino-2-methyl-5-(diphosphooxymethyl)pyrimidine + 2 H(+) = thiamine phosphate + CO2 + diphosphate. It carries out the reaction 2-(2-carboxy-4-methylthiazol-5-yl)ethyl phosphate + 4-amino-2-methyl-5-(diphosphooxymethyl)pyrimidine + 2 H(+) = thiamine phosphate + CO2 + diphosphate. It catalyses the reaction 4-methyl-5-(2-phosphooxyethyl)-thiazole + 4-amino-2-methyl-5-(diphosphooxymethyl)pyrimidine + H(+) = thiamine phosphate + diphosphate. It participates in cofactor biosynthesis; thiamine diphosphate biosynthesis; thiamine phosphate from 4-amino-2-methyl-5-diphosphomethylpyrimidine and 4-methyl-5-(2-phosphoethyl)-thiazole: step 1/1. In terms of biological role, condenses 4-methyl-5-(beta-hydroxyethyl)thiazole monophosphate (THZ-P) and 2-methyl-4-amino-5-hydroxymethyl pyrimidine pyrophosphate (HMP-PP) to form thiamine monophosphate (TMP). The sequence is that of Thiamine-phosphate synthase from Shigella boydii serotype 4 (strain Sb227).